We begin with the raw amino-acid sequence, 62 residues long: Alkaline proteinase (62 aa).

One can recognise a Peptidase S8 domain in the interval 1 to 62 (GSTSYIYDTS…FAPGTSVLSS (62 aa)). The active-site Charge relay system is Asp21.

The protein localises to the secreted. Its activity is regulated as follows. Inhibited by phenylmethanesulfonyl fluoride (PMSF) and chymostatin (CST), but not by Bowman-Birk type trypsin-chymotrypsin inhibitor (BBI). Serine protease. May be involved in the invasion of grains and hydrolysis of grain proteins. In Fusarium culmorum, this protein is Alkaline proteinase.